Here is a 228-residue protein sequence, read N- to C-terminus: Sliding clamp (228 aa).

Belongs to the Tevenvirinae sliding clamp family. As to quaternary structure, homotrimer. Interacts with the viral DNA polymerase; this interaction constitutes the polymerase holoenzyme. Interacts with the sliding-clamp-loader; this interaction allows the sliding-clamp-loader to open the sliding clamp. Interacts with the viral DNA ligase. Part of the replicase complex that includes the DNA polymerase, the polymerase clamp, the clamp loader complex, the single-stranded DNA binding protein, the primase, the helicase and the helicase assembly factor. Interacts with the viral RNA polymerase (RNAP). Part of the transcription activation complex containing host RNAP, the viral RNA polymerase sigma-like factor, the late transcription coactivator, and the sliding clamp.

Its function is as follows. Sliding clamp that encircles the genomic DNA and links the DNA polymerase to the template to control the processivity of DNA synthesis. Responsible for tethering the catalytic subunit of DNA polymerase to DNA during high-speed replication. Interaction with the sliding-clamp-loader opens the sliding clamp so that it can be loaded around the DNA template. During transcription, encircles the DNA and tethers host RNA polymerase (RNAP) to it. This Escherichia coli (Bacteriophage T4) protein is Sliding clamp (45).